The primary structure comprises 238 residues: 2-C-methyl-D-erythritol 4-phosphate cytidylyltransferase (238 aa).

The protein belongs to the IspD/TarI cytidylyltransferase family. IspD subfamily.

The catalysed reaction is 2-C-methyl-D-erythritol 4-phosphate + CTP + H(+) = 4-CDP-2-C-methyl-D-erythritol + diphosphate. Its pathway is isoprenoid biosynthesis; isopentenyl diphosphate biosynthesis via DXP pathway; isopentenyl diphosphate from 1-deoxy-D-xylulose 5-phosphate: step 2/6. Its function is as follows. Catalyzes the formation of 4-diphosphocytidyl-2-C-methyl-D-erythritol from CTP and 2-C-methyl-D-erythritol 4-phosphate (MEP). In Acinetobacter baumannii (strain ATCC 17978 / DSM 105126 / CIP 53.77 / LMG 1025 / NCDC KC755 / 5377), this protein is 2-C-methyl-D-erythritol 4-phosphate cytidylyltransferase.